We begin with the raw amino-acid sequence, 361 residues long: Anthranilate phosphoribosyltransferase (361 aa).

Residues Gly80, Gly83 to Asp84, Thr88, Asn90 to Thr93, Lys108 to Ser116, and Ser120 each bind 5-phospho-alpha-D-ribose 1-diphosphate. Position 80 (Gly80) interacts with anthranilate. Ser92 contributes to the Mg(2+) binding site. Asn111 lines the anthranilate pocket. Residue Arg166 coordinates anthranilate. 2 residues coordinate Mg(2+): Asp224 and Glu225. Positions Glu338 to Asp361 are disordered. A compositionally biased stretch (low complexity) spans Ala343–Ala355.

This sequence belongs to the anthranilate phosphoribosyltransferase family. In terms of assembly, homodimer. Requires Mg(2+) as cofactor.

It carries out the reaction N-(5-phospho-beta-D-ribosyl)anthranilate + diphosphate = 5-phospho-alpha-D-ribose 1-diphosphate + anthranilate. It functions in the pathway amino-acid biosynthesis; L-tryptophan biosynthesis; L-tryptophan from chorismate: step 2/5. Its function is as follows. Catalyzes the transfer of the phosphoribosyl group of 5-phosphorylribose-1-pyrophosphate (PRPP) to anthranilate to yield N-(5'-phosphoribosyl)-anthranilate (PRA). This chain is Anthranilate phosphoribosyltransferase, found in Halorubrum lacusprofundi (strain ATCC 49239 / DSM 5036 / JCM 8891 / ACAM 34).